A 326-amino-acid chain; its full sequence is MSLRLGQIVDALGGSLEGGERDTEILRIAPLESSGPGDLSFLSNPRYQSQLAASQAACVIVAPAMRNAALERGACIVVEQPYTYFAHVTQLWVRAHGQGAPAGIHPSAVVDPQARVAPTASIGPLCVVERGAVIGAHTVLKSRVTVGERCTVGERCILHPGVVIGADGFGFAQQRGEWIKIEQLGAVRIGNDVEIGANTCIDRGALDDTVIEDGVKLDNLIQIAHNVHIGRHTAMAGCSAVAGSTRIGAHCTIAGAASIVGHLQLADNVHISTNTVVTHSITQPGQYTGVFPMDDNAKWEKNAATLRQLYRLRERIKALEQTRKDG.

The active-site Proton acceptor is His225.

The protein belongs to the transferase hexapeptide repeat family. LpxD subfamily. Homotrimer.

It catalyses the reaction a UDP-3-O-[(3R)-3-hydroxyacyl]-alpha-D-glucosamine + a (3R)-hydroxyacyl-[ACP] = a UDP-2-N,3-O-bis[(3R)-3-hydroxyacyl]-alpha-D-glucosamine + holo-[ACP] + H(+). The protein operates within bacterial outer membrane biogenesis; LPS lipid A biosynthesis. Its function is as follows. Catalyzes the N-acylation of UDP-3-O-acylglucosamine using 3-hydroxyacyl-ACP as the acyl donor. Is involved in the biosynthesis of lipid A, a phosphorylated glycolipid that anchors the lipopolysaccharide to the outer membrane of the cell. The protein is UDP-3-O-acylglucosamine N-acyltransferase of Acidovorax ebreus (strain TPSY) (Diaphorobacter sp. (strain TPSY)).